A 400-amino-acid polypeptide reads, in one-letter code: Phosphoglycerate kinase (400 aa).

Residues 22 to 24 (DFN), Arg-38, 61 to 64 (HLGR), Arg-119, and Arg-152 contribute to the substrate site. ATP-binding positions include Lys-205, Gly-296, Glu-327, and 353 to 356 (GGDT).

The protein belongs to the phosphoglycerate kinase family. Monomer.

The protein resides in the cytoplasm. It carries out the reaction (2R)-3-phosphoglycerate + ATP = (2R)-3-phospho-glyceroyl phosphate + ADP. The protein operates within carbohydrate degradation; glycolysis; pyruvate from D-glyceraldehyde 3-phosphate: step 2/5. This is Phosphoglycerate kinase from Campylobacter jejuni subsp. doylei (strain ATCC BAA-1458 / RM4099 / 269.97).